Here is a 190-residue protein sequence, read N- to C-terminus: Anthranilate synthase component 2 (190 aa).

The Glutamine amidotransferase type-1 domain maps to 1-190 (MILLIDNYDS…ILQNFINCLN (190 aa)). 52–54 (CPG) contributes to the L-glutamine binding site. Cys-79 acts as the Nucleophile; for GATase activity in catalysis. Residues Gln-83 and 129–130 (SL) contribute to the L-glutamine site. Catalysis depends on residues His-169 and Glu-171.

Tetramer of two components I and two components II.

It is found in the plastid. The protein resides in the cyanelle. The enzyme catalyses chorismate + L-glutamine = anthranilate + pyruvate + L-glutamate + H(+). The protein operates within amino-acid biosynthesis; L-tryptophan biosynthesis; L-tryptophan from chorismate: step 1/5. The protein is Anthranilate synthase component 2 (trpG) of Cyanophora paradoxa.